A 197-amino-acid polypeptide reads, in one-letter code: CASP-like protein 1B2 (197 aa).

A2 carries the post-translational modification N-acetylalanine. Over 2–17 the chain is Cytoplasmic; it reads AREKIVVAGGSTKSWK. The helical transmembrane segment at 18 to 38 threads the bilayer; it reads LLLGLRVFAFMATLAAAIVMS. Residues 39-69 lie on the Extracellular side of the membrane; it reads LNKETKTLVVATIGTLPIKATLTAKFQDTPA. Residues 70-90 traverse the membrane as a helical segment; that stretch reads FVFFVIANVMVSFHNLLMIVL. Topologically, residues 91–106 are cytoplasmic; it reads QIFSRKLEYKGVRLLS. The helical transmembrane segment at 107 to 127 threads the bilayer; that stretch reads IAILDMLNATLVSAAANAAVF. Topologically, residues 128–156 are extracellular; sequence VAELGKNGNKHAKWNKVCDRFATYCDHGA. The chain crosses the membrane as a helical span at residues 157–177; sequence GALIAAFAGVILMLLVSSVSI. The Cytoplasmic segment spans residues 178–197; it reads SRLLINSKHLSTTATTTAVV.

The protein belongs to the Casparian strip membrane proteins (CASP) family. As to quaternary structure, homodimer and heterodimers.

Its subcellular location is the cell membrane. The chain is CASP-like protein 1B2 from Arabidopsis lyrata subsp. lyrata (Lyre-leaved rock-cress).